An 82-amino-acid polypeptide reads, in one-letter code: Consomatin Ro2 (82 aa).

Residues 1-22 (MQTAYWLMVMMMVWITAPLYEG) form the signal peptide. A propeptide spanning residues 23–57 (GKPNDVIRGLVPDDLTPQFILRSLISRRRSDKDVR) is cleaved from the precursor. Cysteines 62 and 68 form a disulfide. D-tryptophan is present on Trp-64. 2 positions are modified to 4-hydroxyproline: Pro-69 and Pro-70. Residues 72-82 (LWRRHDRKGKD) constitute a propeptide that is removed on maturation.

Belongs to the conotoxin C superfamily. Consomatin family. As to expression, expressed by the venom duct.

Its subcellular location is the secreted. In terms of biological role, moderately activates human somatostatin receptors (SSTR) with a preferential activation of SSTR1 and SSTR4. In vivo, does not cause behavioral changes in mice within a few minutes of intracranial injection, but causes a progressive loss of movement thereafter. Four to five hours after injection, mice recover, even with the highest dose tested. Shows antinociception and antihyperalgesia activities in two mouse models of acute pain, most probably by acting outside the central nervous system. This Conus rolani (Cone snail) protein is Consomatin Ro2.